The primary structure comprises 578 residues: Maltogenic alpha-amylase (578 aa).

It belongs to the glycosyl hydrolase 13 family.

The catalysed reaction is hydrolysis of (1-&gt;4)-alpha-D-glucosidic linkages in polysaccharides so as to remove successive alpha-maltose residues from the non-reducing ends of the chains.. In terms of biological role, converts starch into maltose. In contrary to other maltogenic alpha-amylases BlmA cannot hydrolyze 1,4-alpha-glucosidic linkage next to 1,6-alpha-glucosidic linkages. This Bacillus licheniformis protein is Maltogenic alpha-amylase (blmA).